Reading from the N-terminus, the 130-residue chain is Small ribosomal subunit protein uS9 (130 aa).

This sequence belongs to the universal ribosomal protein uS9 family.

This Histophilus somni (strain 129Pt) (Haemophilus somnus) protein is Small ribosomal subunit protein uS9.